The primary structure comprises 473 residues: Probable acid phosphatase DDB_G0284755 (473 aa).

His-94 (nucleophile) is an active-site residue. The Proton donor role is filled by Asp-359.

The protein belongs to the histidine acid phosphatase family.

The enzyme catalyses a phosphate monoester + H2O = an alcohol + phosphate. This Dictyostelium discoideum (Social amoeba) protein is Probable acid phosphatase DDB_G0284755.